The following is a 345-amino-acid chain: High mobility group protein 20A (345 aa).

Disordered stretches follow at residues 1–130 and 166–206; these read MEST…PFPE and QKYQ…EKES. 2 stretches are compositionally biased toward polar residues: residues 22–38 and 57–67; these read NNQPPFCGTTVSGSSQA and LHQSGEQQLGN. The span at 80–94 shows a compositional bias: basic residues; sequence ARRGGWNKGRKRKRS. The segment at residues 101–169 is a DNA-binding region (HMG box); it reads PKAPLTGYVR…RYTKELQKYQ (69 aa). Over residues 112–125 the composition is skewed to basic and acidic residues; that stretch reads MNERREQLRTERPD. Residues 167–178 show a composition bias toward polar residues; the sequence is KYQNTDAYQTYS. Over residues 179–189 the composition is skewed to basic residues; that stretch reads RKAKSRQKGRQ. Residues 227 to 285 adopt a coiled-coil conformation; that stretch reads SKAREAELRQLRKSNMEFEERNAALQKHVESMRSAVQRLEAELSQEHERNSLLQQHLQS.

It localises to the nucleus. Functionally, plays a role in neuronal differentiation. This Xenopus laevis (African clawed frog) protein is High mobility group protein 20A (hmg20a).